The following is a 444-amino-acid chain: Trigger factor (444 aa).

A PPIase FKBP-type domain is found at Asp-160 to Pro-245.

This sequence belongs to the FKBP-type PPIase family. Tig subfamily.

The protein localises to the cytoplasm. The catalysed reaction is [protein]-peptidylproline (omega=180) = [protein]-peptidylproline (omega=0). Involved in protein export. Acts as a chaperone by maintaining the newly synthesized protein in an open conformation. Functions as a peptidyl-prolyl cis-trans isomerase. This Acinetobacter baylyi (strain ATCC 33305 / BD413 / ADP1) protein is Trigger factor.